The chain runs to 170 residues: VIP peptides (170 aa).

The first 20 residues, 1–20, serve as a signal peptide directing secretion; sequence MDTRNKAQLLVLLTLLSVLF. Positions 21–79 are excised as a propeptide; the sequence is SQTSAWPLYRAPSALRLGDRIPFEGANEPDQVSLKEDIDMLQNALAENDTPYYDVSRNA. Residue serine 76 is modified to Phosphoserine. Methionine 107 carries the post-translational modification Methionine amide. Asparagine 152 bears the Asparagine amide mark. A propeptide spanning residues 156–170 is cleaved from the precursor; that stretch reads SSEGESPDFPEELEK.

This sequence belongs to the glucagon family.

It is found in the secreted. Functionally, VIP is a neuropeptide involved in a diverse array of physiological processes through activating the PACAP subfamily of class B1 G protein-coupled receptors: VIP receptor 1 (VPR1) and VIP receptor 2 (VPR2). Abundantly expressed throughout the CNS and peripheral nervous systems where they primarily exert neuroprotective and immune modulatory roles. Also causes vasodilation, lowers arterial blood pressure, stimulates myocardial contractility, increases glycogenolysis and relaxes the smooth muscle of trachea, stomach and gall bladder. In terms of biological role, PHM-27 and PHV-42 are two bioactive forms from proteolysis of the same precursor protein, that cause vasodilation. PHM-27 is a potent agonist of the calcitonin receptor CALCR, with similar efficacy as calcitonin. The polypeptide is VIP peptides (Homo sapiens (Human)).